The sequence spans 103 residues: Large ribosomal subunit protein mL63 (103 aa).

This sequence belongs to the mitochondrion-specific ribosomal protein mL63 family.

The protein localises to the mitochondrion. The sequence is that of Large ribosomal subunit protein mL63 (mrpl57) from Danio rerio (Zebrafish).